The primary structure comprises 129 residues: Phosphoribosyl-AMP cyclohydrolase (129 aa).

D76 contacts Mg(2+). Residue C77 coordinates Zn(2+). Residues D78 and D80 each contribute to the Mg(2+) site. Residues C97 and C104 each coordinate Zn(2+).

The protein belongs to the PRA-CH family. Homodimer. The cofactor is Mg(2+). Requires Zn(2+) as cofactor.

It is found in the cytoplasm. The enzyme catalyses 1-(5-phospho-beta-D-ribosyl)-5'-AMP + H2O = 1-(5-phospho-beta-D-ribosyl)-5-[(5-phospho-beta-D-ribosylamino)methylideneamino]imidazole-4-carboxamide. It functions in the pathway amino-acid biosynthesis; L-histidine biosynthesis; L-histidine from 5-phospho-alpha-D-ribose 1-diphosphate: step 3/9. In terms of biological role, catalyzes the hydrolysis of the adenine ring of phosphoribosyl-AMP. The polypeptide is Phosphoribosyl-AMP cyclohydrolase (Albidiferax ferrireducens (strain ATCC BAA-621 / DSM 15236 / T118) (Rhodoferax ferrireducens)).